A 396-amino-acid chain; its full sequence is 1-deoxy-D-xylulose 5-phosphate reductoisomerase (396 aa).

NADPH contacts are provided by Thr-15, Gly-16, Ser-17, Ile-18, Gly-41, and Asn-130. Lys-131 contacts 1-deoxy-D-xylulose 5-phosphate. Glu-132 is a binding site for NADPH. Residue Asp-155 coordinates Mn(2+). 1-deoxy-D-xylulose 5-phosphate is bound by residues Ser-156, Glu-157, Ser-181, and His-204. Glu-157 serves as a coordination point for Mn(2+). Gly-210 contacts NADPH. The 1-deoxy-D-xylulose 5-phosphate site is built by Ser-217, Asn-222, Lys-223, and Glu-226. Residue Glu-226 coordinates Mn(2+).

Belongs to the DXR family. Mg(2+) serves as cofactor. The cofactor is Mn(2+).

It catalyses the reaction 2-C-methyl-D-erythritol 4-phosphate + NADP(+) = 1-deoxy-D-xylulose 5-phosphate + NADPH + H(+). Its pathway is isoprenoid biosynthesis; isopentenyl diphosphate biosynthesis via DXP pathway; isopentenyl diphosphate from 1-deoxy-D-xylulose 5-phosphate: step 1/6. Its function is as follows. Catalyzes the NADPH-dependent rearrangement and reduction of 1-deoxy-D-xylulose-5-phosphate (DXP) to 2-C-methyl-D-erythritol 4-phosphate (MEP). This chain is 1-deoxy-D-xylulose 5-phosphate reductoisomerase, found in Bifidobacterium longum (strain DJO10A).